The chain runs to 388 residues: S-adenosylmethionine synthase (388 aa).

ATP is bound at residue histidine 17. Position 19 (aspartate 19) interacts with Mg(2+). Glutamate 45 provides a ligand contact to K(+). The L-methionine site is built by glutamate 58 and glutamine 106. A flexible loop region spans residues 106–116 (QSAHIAQGVDK). ATP-binding positions include 166 to 168 (DAK), aspartate 241, 247 to 248 (RK), alanine 264, and lysine 268. Aspartate 241 lines the L-methionine pocket. L-methionine is bound at residue lysine 272.

It belongs to the AdoMet synthase family. As to quaternary structure, homotetramer; dimer of dimers. Requires Mg(2+) as cofactor. The cofactor is K(+).

It is found in the cytoplasm. The enzyme catalyses L-methionine + ATP + H2O = S-adenosyl-L-methionine + phosphate + diphosphate. It functions in the pathway amino-acid biosynthesis; S-adenosyl-L-methionine biosynthesis; S-adenosyl-L-methionine from L-methionine: step 1/1. Its function is as follows. Catalyzes the formation of S-adenosylmethionine (AdoMet) from methionine and ATP. The overall synthetic reaction is composed of two sequential steps, AdoMet formation and the subsequent tripolyphosphate hydrolysis which occurs prior to release of AdoMet from the enzyme. This chain is S-adenosylmethionine synthase, found in Cereibacter sphaeroides (strain ATCC 17023 / DSM 158 / JCM 6121 / CCUG 31486 / LMG 2827 / NBRC 12203 / NCIMB 8253 / ATH 2.4.1.) (Rhodobacter sphaeroides).